The primary structure comprises 473 residues: ATP synthase subunit beta (473 aa).

Residue 158-165 (GGAGVGKT) participates in ATP binding.

This sequence belongs to the ATPase alpha/beta chains family. In terms of assembly, F-type ATPases have 2 components, CF(1) - the catalytic core - and CF(0) - the membrane proton channel. CF(1) has five subunits: alpha(3), beta(3), gamma(1), delta(1), epsilon(1). CF(0) has three main subunits: a(1), b(2) and c(9-12). The alpha and beta chains form an alternating ring which encloses part of the gamma chain. CF(1) is attached to CF(0) by a central stalk formed by the gamma and epsilon chains, while a peripheral stalk is formed by the delta and b chains.

It is found in the cell membrane. It catalyses the reaction ATP + H2O + 4 H(+)(in) = ADP + phosphate + 5 H(+)(out). In terms of biological role, produces ATP from ADP in the presence of a proton gradient across the membrane. The catalytic sites are hosted primarily by the beta subunits. In Geobacillus stearothermophilus (Bacillus stearothermophilus), this protein is ATP synthase subunit beta.